A 557-amino-acid polypeptide reads, in one-letter code: Urocanate hydratase (557 aa).

Residues 1–20 (MSNPRHNEREVRSPRGDELN) form a disordered region. NAD(+) contacts are provided by residues 52-53 (GG), Gln-130, 176-178 (GMG), Glu-196, Arg-201, 242-243 (NA), 263-267 (QTSAH), 273-274 (YL), and Tyr-322. Cys-410 is a catalytic residue. Position 492 (Gly-492) interacts with NAD(+).

This sequence belongs to the urocanase family. NAD(+) serves as cofactor.

It is found in the cytoplasm. It catalyses the reaction 4-imidazolone-5-propanoate = trans-urocanate + H2O. Its pathway is amino-acid degradation; L-histidine degradation into L-glutamate; N-formimidoyl-L-glutamate from L-histidine: step 2/3. Functionally, catalyzes the conversion of urocanate to 4-imidazolone-5-propionate. This is Urocanate hydratase from Brucella abortus (strain S19).